The primary structure comprises 407 residues: Arginine biosynthesis bifunctional protein ArgJ (407 aa).

6 residues coordinate substrate: threonine 157, lysine 183, threonine 194, glutamate 280, asparagine 402, and threonine 407. Threonine 194 acts as the Nucleophile in catalysis.

It belongs to the ArgJ family. In terms of assembly, heterotetramer of two alpha and two beta chains.

The protein resides in the cytoplasm. It catalyses the reaction N(2)-acetyl-L-ornithine + L-glutamate = N-acetyl-L-glutamate + L-ornithine. The enzyme catalyses L-glutamate + acetyl-CoA = N-acetyl-L-glutamate + CoA + H(+). It participates in amino-acid biosynthesis; L-arginine biosynthesis; L-ornithine and N-acetyl-L-glutamate from L-glutamate and N(2)-acetyl-L-ornithine (cyclic): step 1/1. Its pathway is amino-acid biosynthesis; L-arginine biosynthesis; N(2)-acetyl-L-ornithine from L-glutamate: step 1/4. In terms of biological role, catalyzes two activities which are involved in the cyclic version of arginine biosynthesis: the synthesis of N-acetylglutamate from glutamate and acetyl-CoA as the acetyl donor, and of ornithine by transacetylation between N(2)-acetylornithine and glutamate. The chain is Arginine biosynthesis bifunctional protein ArgJ from Oceanobacillus iheyensis (strain DSM 14371 / CIP 107618 / JCM 11309 / KCTC 3954 / HTE831).